A 262-amino-acid chain; its full sequence is Large ribosomal subunit protein eL8B (262 aa).

The tract at residues 1–36 (MAPKGKKVAPAPLATKSAKSSESKNPLFESTPKNFG) is disordered.

This sequence belongs to the eukaryotic ribosomal protein eL8 family. In terms of assembly, component of the large ribosomal subunit. Mature ribosomes consist of a small (40S) and a large (60S) subunit. The 40S subunit contains about 32 different proteins and 1 molecule of RNA (18S). The 60S subunit contains 45 different proteins and 3 molecules of RNA (25S, 5.8S and 5S).

It localises to the cytoplasm. In terms of biological role, component of the ribosome, a large ribonucleoprotein complex responsible for the synthesis of proteins in the cell. The small ribosomal subunit (SSU) binds messenger RNAs (mRNAs) and translates the encoded message by selecting cognate aminoacyl-transfer RNA (tRNA) molecules. The large subunit (LSU) contains the ribosomal catalytic site termed the peptidyl transferase center (PTC), which catalyzes the formation of peptide bonds, thereby polymerizing the amino acids delivered by tRNAs into a polypeptide chain. The nascent polypeptides leave the ribosome through a tunnel in the LSU and interact with protein factors that function in enzymatic processing, targeting, and the membrane insertion of nascent chains at the exit of the ribosomal tunnel. This Candida albicans (strain SC5314 / ATCC MYA-2876) (Yeast) protein is Large ribosomal subunit protein eL8B.